Here is a 431-residue protein sequence, read N- to C-terminus: Adenylosuccinate synthetase 2 (431 aa).

GTP contacts are provided by residues 13–19 (GDEGKGK) and 41–43 (GHT). Aspartate 14 (proton acceptor) is an active-site residue. Positions 14 and 41 each coordinate Mg(2+). Residues 14–17 (DEGK), 39–42 (NAGH), threonine 130, arginine 144, glutamine 225, threonine 240, and arginine 304 contribute to the IMP site. Catalysis depends on histidine 42, which acts as the Proton donor. Residue 300 to 306 (SVTGRPR) participates in substrate binding. Residues arginine 306, 332 to 334 (KLD), and 414 to 416 (STG) each bind GTP.

The protein belongs to the adenylosuccinate synthetase family. Homodimer. The cofactor is Mg(2+).

The protein localises to the cytoplasm. It carries out the reaction IMP + L-aspartate + GTP = N(6)-(1,2-dicarboxyethyl)-AMP + GDP + phosphate + 2 H(+). It functions in the pathway purine metabolism; AMP biosynthesis via de novo pathway; AMP from IMP: step 1/2. Plays an important role in the de novo pathway of purine nucleotide biosynthesis. Catalyzes the first committed step in the biosynthesis of AMP from IMP. The sequence is that of Adenylosuccinate synthetase 2 from Chromobacterium violaceum (strain ATCC 12472 / DSM 30191 / JCM 1249 / CCUG 213 / NBRC 12614 / NCIMB 9131 / NCTC 9757 / MK).